Consider the following 724-residue polypeptide: Polyribonucleotide nucleotidyltransferase (724 aa).

Residues Asp-488 and Asp-494 each coordinate Mg(2+). Residues 555 to 614 (PRMITVKINPEKIRDVIGKGGSTIQALTKETGCTIDIGEDGTITIASTSSEGMAEAKRRI) enclose the KH domain. An S1 motif domain is found at 624 to 692 (GKIYNGTVLK…EKGRMRLSIK (69 aa)). Positions 697-724 (EEGDVPVAAPQAPGAGDAASQQQQQQQQ) are disordered. Positions 701 to 724 (VPVAAPQAPGAGDAASQQQQQQQQ) are enriched in low complexity.

Belongs to the polyribonucleotide nucleotidyltransferase family. It depends on Mg(2+) as a cofactor.

Its subcellular location is the cytoplasm. The catalysed reaction is RNA(n+1) + phosphate = RNA(n) + a ribonucleoside 5'-diphosphate. In terms of biological role, involved in mRNA degradation. Catalyzes the phosphorolysis of single-stranded polyribonucleotides processively in the 3'- to 5'-direction. In Ralstonia pickettii (strain 12J), this protein is Polyribonucleotide nucleotidyltransferase.